The sequence spans 396 residues: Putative carbamoyltransferase YgeW (396 aa).

Carbamoyl phosphate-binding positions include 71-74 (STRT), Gln-98, 165-168 (HPTQ), and 330-331 (CL).

It belongs to the aspartate/ornithine carbamoyltransferase superfamily. In terms of assembly, homotrimer.

In Escherichia coli O157:H7, this protein is Putative carbamoyltransferase YgeW (ygeW).